Reading from the N-terminus, the 86-residue chain is Chymotrypsin inhibitor (86 aa).

The N-terminal stretch at 1–22 (MKLLFAIVALLALAFLCADISA) is a signal peptide.

The protein belongs to the protease inhibitor I13 (potato type I serine protease inhibitor) family. As to quaternary structure, monomer. Expressed in the body wall, coelomocytes and at a lower level in intestine.

It localises to the secreted. Functionally, inhibits L.terrestris digestive chymotrypsin LT_CH 1 and bovine alpha-chymotrypsin. The polypeptide is Chymotrypsin inhibitor (Lumbricus terrestris (Common earthworm)).